The primary structure comprises 472 residues: Cysteine--tRNA ligase (472 aa).

A Zn(2+)-binding site is contributed by Cys29. The short motif at 31-41 (ITVYDYCHLGH) is the 'HIGH' region element. Zn(2+) contacts are provided by Cys214, His239, and Glu243. Residues 271–275 (KMSKS) carry the 'KMSKS' region motif. Lys274 is a binding site for ATP.

It belongs to the class-I aminoacyl-tRNA synthetase family. As to quaternary structure, monomer. It depends on Zn(2+) as a cofactor.

The protein localises to the cytoplasm. It carries out the reaction tRNA(Cys) + L-cysteine + ATP = L-cysteinyl-tRNA(Cys) + AMP + diphosphate. The protein is Cysteine--tRNA ligase of Picosynechococcus sp. (strain ATCC 27264 / PCC 7002 / PR-6) (Agmenellum quadruplicatum).